A 181-amino-acid polypeptide reads, in one-letter code: NADH-quinone oxidoreductase subunit B (181 aa).

Residues C45, C46, C111, and C140 each contribute to the [4Fe-4S] cluster site.

This sequence belongs to the complex I 20 kDa subunit family. As to quaternary structure, NDH-1 is composed of 14 different subunits. Subunits NuoB, C, D, E, F, and G constitute the peripheral sector of the complex. Requires [4Fe-4S] cluster as cofactor.

It is found in the cell inner membrane. It catalyses the reaction a quinone + NADH + 5 H(+)(in) = a quinol + NAD(+) + 4 H(+)(out). NDH-1 shuttles electrons from NADH, via FMN and iron-sulfur (Fe-S) centers, to quinones in the respiratory chain. The immediate electron acceptor for the enzyme in this species is believed to be a menaquinone. Couples the redox reaction to proton translocation (for every two electrons transferred, four hydrogen ions are translocated across the cytoplasmic membrane), and thus conserves the redox energy in a proton gradient. In Flavobacterium psychrophilum (strain ATCC 49511 / DSM 21280 / CIP 103535 / JIP02/86), this protein is NADH-quinone oxidoreductase subunit B.